The chain runs to 298 residues: Large ribosomal subunit protein uL18 (298 aa).

This sequence belongs to the universal ribosomal protein uL18 family. As to quaternary structure, component of the large ribosomal subunit. Mature ribosomes consist of a small (40S) and a large (60S) subunit. The 40S subunit contains about 32 different proteins and 1 molecule of RNA (18S). The 60S subunit contains 45 different proteins and 3 molecules of RNA (25S, 5.8S and 5S).

Its subcellular location is the cytoplasm. In terms of biological role, component of the ribosome, a large ribonucleoprotein complex responsible for the synthesis of proteins in the cell. The small ribosomal subunit (SSU) binds messenger RNAs (mRNAs) and translates the encoded message by selecting cognate aminoacyl-transfer RNA (tRNA) molecules. The large subunit (LSU) contains the ribosomal catalytic site termed the peptidyl transferase center (PTC), which catalyzes the formation of peptide bonds, thereby polymerizing the amino acids delivered by tRNAs into a polypeptide chain. The nascent polypeptides leave the ribosome through a tunnel in the LSU and interact with protein factors that function in enzymatic processing, targeting, and the membrane insertion of nascent chains at the exit of the ribosomal tunnel. This chain is Large ribosomal subunit protein uL18, found in Candida albicans (strain SC5314 / ATCC MYA-2876) (Yeast).